The chain runs to 188 residues: Elongation factor P (188 aa).

This sequence belongs to the elongation factor P family.

The protein resides in the cytoplasm. It participates in protein biosynthesis; polypeptide chain elongation. Its function is as follows. Involved in peptide bond synthesis. Stimulates efficient translation and peptide-bond synthesis on native or reconstituted 70S ribosomes in vitro. Probably functions indirectly by altering the affinity of the ribosome for aminoacyl-tRNA, thus increasing their reactivity as acceptors for peptidyl transferase. The protein is Elongation factor P of Chlorobaculum tepidum (strain ATCC 49652 / DSM 12025 / NBRC 103806 / TLS) (Chlorobium tepidum).